A 260-amino-acid polypeptide reads, in one-letter code: Acetylglutamate kinase (260 aa).

Substrate-binding positions include 46–47, Arg68, and Asn160; that span reads GG.

Belongs to the acetylglutamate kinase family. ArgB subfamily.

The protein resides in the cytoplasm. The enzyme catalyses N-acetyl-L-glutamate + ATP = N-acetyl-L-glutamyl 5-phosphate + ADP. Its pathway is amino-acid biosynthesis; L-arginine biosynthesis; N(2)-acetyl-L-ornithine from L-glutamate: step 2/4. Functionally, catalyzes the ATP-dependent phosphorylation of N-acetyl-L-glutamate. The sequence is that of Acetylglutamate kinase from Shewanella sp. (strain ANA-3).